Here is a 308-residue protein sequence, read N- to C-terminus: Taste receptor type 2 member 107 (308 aa).

The Extracellular segment spans residues 1-7 (MLNSAEG). Residues 8-28 (ILLCVVTSEAVLGVLGDTYIA) form a helical membrane-spanning segment. Topologically, residues 29 to 43 (LFNCMDYAKNKKLSK) are cytoplasmic. The chain crosses the membrane as a helical span at residues 44–64 (IGFILIGLAISRIGVVWIIIL). Residues 65-87 (QGYIQVFFPHMLTSGNITEYITY) are Extracellular-facing. Asn-80 is a glycosylation site (N-linked (GlcNAc...) asparagine). The helical transmembrane segment at 88–108 (IWVFLNHLSVWFVTNLNILYF) threads the bilayer. Residues 109–125 (LKIANFSNSVFLWLKRR) lie on the Cytoplasmic side of the membrane. Residues 126 to 146 (VNAVFIFLSGCLLTSWLLCFP) traverse the membrane as a helical segment. Residues 147-180 (QMTKILQNSKMHQRNTSWVHQRKNYFLINQSVTN) are Extracellular-facing. 2 N-linked (GlcNAc...) asparagine glycosylation sites follow: Asn-161 and Asn-175. Residues 181-201 (LGIFFFIIVSLITCFLLIVFL) form a helical membrane-spanning segment. Residues 202–232 (WRHVRQMHSDVSGFRDHSTKVHVKAMKFLIS) lie on the Cytoplasmic side of the membrane. A helical transmembrane segment spans residues 233–253 (FMVFFILHFVGLSIEVLCFIL). The Extracellular segment spans residues 254–258 (PQNKL). Residues 259 to 279 (LFITGLTATCLYPCGHSIIVI) form a helical membrane-spanning segment. At 280–308 (LGNKQLKQASLKALQQLKCCETKGNFRVK) the chain is on the cytoplasmic side.

The protein belongs to the G-protein coupled receptor T2R family.

Its subcellular location is the membrane. In terms of biological role, putative taste receptor which may play a role in the perception of bitterness. The sequence is that of Taste receptor type 2 member 107 from Mus musculus (Mouse).